Here is a 337-residue protein sequence, read N- to C-terminus: Undecaprenyl-phosphate 4-deoxy-4-formamido-L-arabinose transferase (337 aa).

2 helical membrane-spanning segments follow: residues 235–255 (LSIIGFSMALLGVLFAALLII) and 270–290 (FVLFAVLFVFTGGQFIGMGLL).

This sequence belongs to the glycosyltransferase 2 family.

Its subcellular location is the cell inner membrane. The enzyme catalyses UDP-4-deoxy-4-formamido-beta-L-arabinose + di-trans,octa-cis-undecaprenyl phosphate = 4-deoxy-4-formamido-alpha-L-arabinopyranosyl di-trans,octa-cis-undecaprenyl phosphate + UDP. Its pathway is glycolipid biosynthesis; 4-amino-4-deoxy-alpha-L-arabinose undecaprenyl phosphate biosynthesis; 4-amino-4-deoxy-alpha-L-arabinose undecaprenyl phosphate from UDP-4-deoxy-4-formamido-beta-L-arabinose and undecaprenyl phosphate: step 1/2. It participates in bacterial outer membrane biogenesis; lipopolysaccharide biosynthesis. In terms of biological role, catalyzes the transfer of 4-deoxy-4-formamido-L-arabinose from UDP to undecaprenyl phosphate. The modified arabinose is attached to lipid A and is required for resistance to polymyxin and cationic antimicrobial peptides. The protein is Undecaprenyl-phosphate 4-deoxy-4-formamido-L-arabinose transferase of Pseudomonas savastanoi pv. phaseolicola (strain 1448A / Race 6) (Pseudomonas syringae pv. phaseolicola (strain 1448A / Race 6)).